The sequence spans 278 residues: MKNWKFNKINYPTFEKSGAIPRSITKTFEKLKKELNPHSESEIIEEFTISRYQTIASLRYLIVLVVFPVVVHQVSKNFIIGPAVDYFWKYNQIDVFLNSSQEERAFAELQRFEEKIHFEMLIGTKQSVSQQSLEASIKQKAVEIADHYTYESLHAIKNILADSISISVFILLIVLGKRQTFVLKSFLNEIVYGLSDTAKAFLIILFTDMFIGFHSPHGWEVVIESLLRHFGLPENRDFIFLFIATFPVSLDTVFKYWIFRYLNQVSPSAVATYHNMNE.

Helical transmembrane passes span 61–81, 155–175, 203–223, and 238–258; these read LIVLVVFPVVVHQVSKNFIIG, AIKNILADSISISVFILLIVL, IILFTDMFIGFHSPHGWEVVI, and FIFLFIATFPVSLDTVFKYWI.

The protein belongs to the CemA family.

Its subcellular location is the plastid. It is found in the chloroplast inner membrane. It catalyses the reaction K(+)(in) + H(+)(out) = K(+)(out) + H(+)(in). Contributes to K(+)/H(+) antiport activity by supporting proton efflux to control proton extrusion and homeostasis in chloroplasts in a light-dependent manner to modulate photosynthesis. Prevents excessive induction of non-photochemical quenching (NPQ) under continuous-light conditions. Indirectly promotes efficient inorganic carbon uptake into chloroplasts. This chain is Potassium/proton antiporter CemA, found in Cyanidium caldarium (Red alga).